Reading from the N-terminus, the 180-residue chain is MVPRLKEKYQTEVVPALMQEFQYRSVMQAPRLEKIVLNIGLGEAIQNSKALDAATSDLAAIAGQKPVITRARKSIAAFKVRQGMPIGVMVTLRGPRMWSFFDRLVNLVLPRLRDFRGVSRRSFDGRGNYSLGLREQIVFPEIDYDKVDKLRGLEVVIVTTAPDDEQGYALLKRLGMPFRD.

The protein belongs to the universal ribosomal protein uL5 family. As to quaternary structure, part of the 50S ribosomal subunit; part of the 5S rRNA/L5/L18/L25 subcomplex. Contacts the 5S rRNA and the P site tRNA. Forms a bridge to the 30S subunit in the 70S ribosome.

Its function is as follows. This is one of the proteins that bind and probably mediate the attachment of the 5S RNA into the large ribosomal subunit, where it forms part of the central protuberance. In the 70S ribosome it contacts protein S13 of the 30S subunit (bridge B1b), connecting the 2 subunits; this bridge is implicated in subunit movement. Contacts the P site tRNA; the 5S rRNA and some of its associated proteins might help stabilize positioning of ribosome-bound tRNAs. The polypeptide is Large ribosomal subunit protein uL5 (Roseiflexus castenholzii (strain DSM 13941 / HLO8)).